Consider the following 483-residue polypeptide: MGDDRPFVCNAPGCGQRFTNEDHLAVHKHKHEMTLKFGPARTDSVIIADQTPTPTRFLKNCEEVGLFNELASSFEHEFKKAADEDEKKAAAGPLDMSLPSTPDIKIKEEEPVEVDSSPPDSPASSPCSPPLKEKEVTPKPVLISTPTPTIVRPGSLPLHLGYDPLHPTLPSPTSVITQAPPSNRQMGSPTGSLPLVMHLANGQTMPVLPGPPVQMPSVISLARPVSMVPNIPGIPGPPVNSSGSISPSGHPIPSEAKMRLKATLTHQVSSINGGCGMVVGSASTMVTARPEQSQILIQHPDAPSPAQPQVSPAQPTPSTGGRRRRTVDEDPDERRQRFLERNRAAASRCRQKRKLWVSSLEKKAEELTSQNIQLSNEVTLLRNEVAQLKQLLLAHKDCPVTALQKKTQGYLESPKESSEPTGSPAPVIQHSSATAPSNGLSVRSAAEAVATSVLTQMASQRTELSMPIQSHVIMTPQSQSAGR.

Positions 1 to 285 are transactivation domain; sequence MGDDRPFVCN…GMVVGSASTM (285 aa). The C2H2-type zinc finger occupies 7–31; it reads FVCNAPGCGQRFTNEDHLAVHKHKH. Threonine 51 is subject to Phosphothreonine; by MAPK11. 2 positions are modified to phosphothreonine: threonine 53 and threonine 101. Lysine 107 participates in a covalent cross-link: Glycyl lysine isopeptide (Lys-Gly) (interchain with G-Cter in SUMO1). Disordered stretches follow at residues 110–148 and 299–345; these read EPVEVDSSPPDSPASSPCSPPLKEKEVTPKPVLISTPTP and HPDA…NRAA. Low complexity-rich tracts occupy residues 114–126 and 307–320; these read VDSSPPDSPASSP and QPQVSPAQPTPSTG. The span at 326–343 shows a compositional bias: basic and acidic residues; sequence TVDEDPDERRQRFLERNR. The bZIP domain occupies 332-395; that stretch reads DERRQRFLER…AQLKQLLLAH (64 aa). The segment at 334–354 is basic motif; the sequence is RRQRFLERNRAAASRCRQKRK. The tract at residues 360–388 is leucine-zipper; it reads LEKKAEELTSQNIQLSNEVTLLRNEVAQL. Disordered regions lie at residues 407–440 and 464–483; these read TQGYLESPKESSEPTGSPAPVIQHSSATAPSNGL and LSMPIQSHVIMTPQSQSAGR. Phosphoserine occurs at positions 413 and 423. The span at 429–440 shows a compositional bias: polar residues; the sequence is QHSSATAPSNGL.

It belongs to the bZIP family. Homodimer; binds DNA as homodimer. Heterodimer; heterodimerizes with other members of ATF family and with JUN family members. Interacts with JNK2; the interaction does not phosphorylate ATF7 but acts as a docking site for other ATF-associated partners such as JUN family members. Interacts (via its transactivation domain) with TAF12 (isoforms TAFII15 and TAFII20); the interaction potentiates the transactivation activity (isoform TAFII20 only) and is inhibited by ATF7 sumoylation. Interacts with TAF4; the interaction inhibits the TAF12-dependent transactivation. Interacts with MAPK9; the interaction does not phosphorylate ATF7 but acts as a docking site for ATF7-associated partners such as JUN. Interacts with Ku complex components XRCC6 and XRCC7. Interacts with TERT. On EGF stimulation, phosphorylated first on Thr-53 allowing subsequent phosphorylation on Thr-51. This latter phosphorylation prevents sumoylation, increases binding to TAF12 and enhances transcriptional activity. Social isolation stress as well as TNF-alpha also induce the phosphorylation of ATF7. Phosphorylated in proliferating colonic and small intestinal epithelial cells. In terms of processing, sumoylation delays nuclear localization and inhibits transactivation activity through preventing binding to TAF12. RANBP2 appears to be the specific E3 ligase.

Its subcellular location is the nucleus. It is found in the nucleoplasm. It localises to the chromosome. The protein localises to the telomere. Functionally, stress-responsive chromatin regulator that plays a role in various biological processes including innate immunological memory, adipocyte differentiation or telomerase regulation. In absence of stress, contributes to the formation of heterochromatin and heterochromatin-like structure by recruiting histone H3K9 tri- and di-methyltransferases thus silencing the transcription of target genes such as STAT1 in adipocytes, or genes involved in innate immunity in macrophages and adipocytes. Stress induces ATF7 phosphorylation that disrupts interactions with histone methyltransferase and enhances the association with coactivators containing histone acetyltransferase and/or histone demethylase, leading to disruption of the heterochromatin-like structure and subsequently transcriptional activation. In response to TNF-alpha, which is induced by various stresses, phosphorylated ATF7 and telomerase are released from telomeres leading to telomere shortening. Plays also a role in maintaining epithelial regenerative capacity and protecting against cell death during intestinal epithelial damage and repair. This is Cyclic AMP-dependent transcription factor ATF-7 (ATF7) from Pongo abelii (Sumatran orangutan).